The primary structure comprises 116 residues: Protein Wnt-5a (116 aa).

A lipid anchor (O-palmitoleoyl serine; by PORCN) is attached at Ser1. N-linked (GlcNAc...) asparagine glycans are attached at residues Asn69 and Asn83. A disulfide bond links Cys82 and Cys97.

It belongs to the Wnt family. Palmitoleoylation is required for efficient binding to frizzled receptors. Depalmitoleoylation leads to Wnt signaling pathway inhibition.

The protein resides in the secreted. Its subcellular location is the extracellular space. It is found in the extracellular matrix. Ligand for members of the frizzled family of seven transmembrane receptors. Can activate or inhibit canonical Wnt signaling, depending on receptor context. Required during embryogenesis for extension of the primary anterior-posterior axis. This Meleagris gallopavo (Wild turkey) protein is Protein Wnt-5a (WNT5A).